The sequence spans 321 residues: L-carnitine dehydrogenase (321 aa).

14–19 (GSGVIG) lines the NAD(+) pocket.

This sequence belongs to the 3-hydroxyacyl-CoA dehydrogenase family. L-carnitine dehydrogenase subfamily. As to quaternary structure, homodimer.

Its subcellular location is the cytoplasm. It catalyses the reaction carnitine + NAD(+) = 3-dehydrocarnitine + NADH + H(+). It participates in amine and polyamine metabolism; carnitine metabolism. Functionally, catalyzes the NAD(+)-dependent oxidation of L-carnitine to 3-dehydrocarnitine. The chain is L-carnitine dehydrogenase from Pseudomonas putida (strain ATCC 47054 / DSM 6125 / CFBP 8728 / NCIMB 11950 / KT2440).